The primary structure comprises 260 residues: Type III pantothenate kinase (260 aa).

ATP is bound at residue 6–13 (DAGNTNIV). 108 to 111 (GADR) lines the substrate pocket. Catalysis depends on Asp-110, which acts as the Proton acceptor. K(+) is bound at residue Asp-130. Thr-133 is a binding site for ATP. Thr-187 serves as a coordination point for substrate.

This sequence belongs to the type III pantothenate kinase family. In terms of assembly, homodimer. The cofactor is NH4(+). K(+) serves as cofactor.

Its subcellular location is the cytoplasm. It carries out the reaction (R)-pantothenate + ATP = (R)-4'-phosphopantothenate + ADP + H(+). It functions in the pathway cofactor biosynthesis; coenzyme A biosynthesis; CoA from (R)-pantothenate: step 1/5. Catalyzes the phosphorylation of pantothenate (Pan), the first step in CoA biosynthesis. This is Type III pantothenate kinase from Rhizorhabdus wittichii (strain DSM 6014 / CCUG 31198 / JCM 15750 / NBRC 105917 / EY 4224 / RW1) (Sphingomonas wittichii).